The primary structure comprises 290 residues: ATP synthase gamma chain (290 aa).

It belongs to the ATPase gamma chain family. As to quaternary structure, F-type ATPases have 2 components, CF(1) - the catalytic core - and CF(0) - the membrane proton channel. CF(1) has five subunits: alpha(3), beta(3), gamma(1), delta(1), epsilon(1). CF(0) has three main subunits: a, b and c.

The protein localises to the cell membrane. Produces ATP from ADP in the presence of a proton gradient across the membrane. The gamma chain is believed to be important in regulating ATPase activity and the flow of protons through the CF(0) complex. The sequence is that of ATP synthase gamma chain from Listeria innocua serovar 6a (strain ATCC BAA-680 / CLIP 11262).